The chain runs to 367 residues: Flagellin 2 (367 aa).

It belongs to the bacterial flagellin family.

Its subcellular location is the secreted. It localises to the bacterial flagellum. Flagellin is the subunit protein which polymerizes to form the filaments of bacterial flagella. The sequence is that of Flagellin 2 (fliC2) from Proteus mirabilis.